The chain runs to 78 residues: Large ribosomal subunit protein uL24 (78 aa).

It belongs to the universal ribosomal protein uL24 family. As to quaternary structure, part of the 50S ribosomal subunit.

One of two assembly initiator proteins, it binds directly to the 5'-end of the 23S rRNA, where it nucleates assembly of the 50S subunit. Functionally, one of the proteins that surrounds the polypeptide exit tunnel on the outside of the subunit. The chain is Large ribosomal subunit protein uL24 from Helicobacter hepaticus (strain ATCC 51449 / 3B1).